An 89-amino-acid polypeptide reads, in one-letter code: MALTKERTASVVQQYGSGEKDTGSSSVQIALLTERIRQLTDHCKVHPKDKSSNRGLLVLVGRRRRLLRYSRRVSMGAYRSLVKSLGLRK.

Residues 1–23 (MALTKERTASVVQQYGSGEKDTG) are disordered.

This sequence belongs to the universal ribosomal protein uS15 family. Part of the 30S ribosomal subunit. Forms a bridge to the 50S subunit in the 70S ribosome, contacting the 23S rRNA.

Its function is as follows. One of the primary rRNA binding proteins, it binds directly to 16S rRNA where it helps nucleate assembly of the platform of the 30S subunit by binding and bridging several RNA helices of the 16S rRNA. In terms of biological role, forms an intersubunit bridge (bridge B4) with the 23S rRNA of the 50S subunit in the ribosome. The protein is Small ribosomal subunit protein uS15 of Treponema pallidum (strain Nichols).